A 663-amino-acid chain; its full sequence is Protein MNE1 (663 aa).

This chain is Protein MNE1 (MNE1), found in Saccharomyces cerevisiae (strain ATCC 204508 / S288c) (Baker's yeast).